Consider the following 191-residue polypeptide: Protein GrpE (191 aa).

Positions 1-15 (MGKEEKNNIEDKALD) are enriched in basic and acidic residues. A disordered region spans residues 1–35 (MGKEEKNNIEDKALDNEQEMDQESTSKAVEELSIE).

Belongs to the GrpE family. Homodimer.

The protein localises to the cytoplasm. In terms of biological role, participates actively in the response to hyperosmotic and heat shock by preventing the aggregation of stress-denatured proteins, in association with DnaK and GrpE. It is the nucleotide exchange factor for DnaK and may function as a thermosensor. Unfolded proteins bind initially to DnaJ; upon interaction with the DnaJ-bound protein, DnaK hydrolyzes its bound ATP, resulting in the formation of a stable complex. GrpE releases ADP from DnaK; ATP binding to DnaK triggers the release of the substrate protein, thus completing the reaction cycle. Several rounds of ATP-dependent interactions between DnaJ, DnaK and GrpE are required for fully efficient folding. The sequence is that of Protein GrpE from Francisella philomiragia subsp. philomiragia (strain ATCC 25017 / CCUG 19701 / FSC 153 / O#319-036).